The primary structure comprises 198 residues: RNA pyrophosphohydrolase (198 aa).

In terms of domain architecture, Nudix hydrolase spans 6 to 149 (GYRPNVGIVI…KKEVYRKAMK (144 aa)). The Nudix box motif lies at 38 to 59 (GGINDNESAEQAMYRELFEEVG).

Belongs to the Nudix hydrolase family. RppH subfamily. It depends on a divalent metal cation as a cofactor.

In terms of biological role, accelerates the degradation of transcripts by removing pyrophosphate from the 5'-end of triphosphorylated RNA, leading to a more labile monophosphorylated state that can stimulate subsequent ribonuclease cleavage. The protein is RNA pyrophosphohydrolase of Pasteurella multocida (strain Pm70).